A 67-amino-acid polypeptide reads, in one-letter code: MDNNTKLQKLYEQLAATGSEKELDAMLDENMAGAGSPLTVTITGLIVAATTGFDWCPTGACTYSCRV.

The propeptide at 1 to 34 (MDNNTKLQKLYEQLAATGSEKELDAMLDENMAGA) is cleaved by FlvT. Ser-36 is subject to 2,3-didehydroalanine (Ser); by FlvM2. 2,3-didehydrobutyrine; by FlvM2 occurs at positions 39 and 43. 3 cross-links (beta-methyllanthionine (Thr-Cys); by FlvM2) span residues 50–56 (TTGFDWC), 58–61 (TGAC), and 62–65 (TYSC).

Contains DL-beta-methyllanthionine, when coepressed in E.coli with the flavecin synthetase FlvM2.

Its subcellular location is the secreted. Functionally, lanthionine-containing peptide antibiotic (lantibiotic) only active on Gram-positive bacteria in synergy with Flvalpha.a. Is not active in absence of Flvalpha.a, which is encoded by the same operon than Flvbeta.b. The bactericidal activity of lantibiotics is based on depolarization of energized bacterial cytoplasmic membranes, initiated by the formation of aqueous transmembrane pores. This chain is Lantibiotic Flvbeta.b, found in Ruminococcus flavefaciens.